A 195-amino-acid chain; its full sequence is ATP-dependent Clp protease proteolytic subunit (195 aa).

Residue Ser99 is the Nucleophile of the active site. The active site involves His124.

Belongs to the peptidase S14 family. In terms of assembly, fourteen ClpP subunits assemble into 2 heptameric rings which stack back to back to give a disk-like structure with a central cavity, resembling the structure of eukaryotic proteasomes.

Its subcellular location is the cytoplasm. It carries out the reaction Hydrolysis of proteins to small peptides in the presence of ATP and magnesium. alpha-casein is the usual test substrate. In the absence of ATP, only oligopeptides shorter than five residues are hydrolyzed (such as succinyl-Leu-Tyr-|-NHMec, and Leu-Tyr-Leu-|-Tyr-Trp, in which cleavage of the -Tyr-|-Leu- and -Tyr-|-Trp bonds also occurs).. Its function is as follows. Cleaves peptides in various proteins in a process that requires ATP hydrolysis. Has a chymotrypsin-like activity. Plays a major role in the degradation of misfolded proteins. The sequence is that of ATP-dependent Clp protease proteolytic subunit from Carboxydothermus hydrogenoformans (strain ATCC BAA-161 / DSM 6008 / Z-2901).